Here is a 64-residue protein sequence, read N- to C-terminus: Large ribosomal subunit protein bL35 (64 aa).

This sequence belongs to the bacterial ribosomal protein bL35 family.

This is Large ribosomal subunit protein bL35 from Shewanella oneidensis (strain ATCC 700550 / JCM 31522 / CIP 106686 / LMG 19005 / NCIMB 14063 / MR-1).